The chain runs to 244 residues: Small ribosomal subunit protein eS4 (244 aa).

Positions 43–106 (LPLLLVVRDI…DENYLVLFDE (64 aa)) constitute an S4 RNA-binding domain.

Belongs to the eukaryotic ribosomal protein eS4 family.

This chain is Small ribosomal subunit protein eS4, found in Methanococcus maripaludis (strain C6 / ATCC BAA-1332).